We begin with the raw amino-acid sequence, 308 residues long: D-alanine--D-alanine ligase (308 aa).

Residues 100 to 295 (KEVFVRNGLP…FDGLIGRLIE (196 aa)) enclose the ATP-grasp domain. 127 to 180 (PFAFPAFIKSNNGGSSLALHRVSCPGELARALDELFTRGGEAIIEPAVEGVEVT) serves as a coordination point for ATP. Positions 249, 262, and 264 each coordinate Mg(2+).

This sequence belongs to the D-alanine--D-alanine ligase family. Mg(2+) is required as a cofactor. Mn(2+) serves as cofactor.

It localises to the cytoplasm. The enzyme catalyses 2 D-alanine + ATP = D-alanyl-D-alanine + ADP + phosphate + H(+). It participates in cell wall biogenesis; peptidoglycan biosynthesis. Its function is as follows. Cell wall formation. This Oleidesulfovibrio alaskensis (strain ATCC BAA-1058 / DSM 17464 / G20) (Desulfovibrio alaskensis) protein is D-alanine--D-alanine ligase.